The primary structure comprises 431 residues: Growth-regulating factor 9 (431 aa).

Residues 24 to 59 enclose the QLQ domain; that stretch reads WMKAAQLMEFRMQALVYRYIEAGLRVPHHLVVPIWN. 2 consecutive WRC domains span residues 89-133 and 307-351; these read ETEP…LVES and DNEP…VDTT. Short sequence motifs (bipartite nuclear localization signal) lie at residues 94–104, 122–129, 312–322, and 340–345; these read RCRRTDGKKWR, RGRKRSRK, and RGMKKK.

The protein belongs to the GRF family. Interacts with GIF1. In terms of tissue distribution, detected in the shoot apical meristem (SAM) and in young leaf primordium.

The protein localises to the nucleus. Its function is as follows. Transcription activator that plays a role in the regulation of cell expansion in leaf and cotyledons tissues. Component of a network formed by miR396, the GRFs and their interacting factors (GIFs) acting in the regulation of meristem function, at least partially through the control of cell proliferation. In Arabidopsis thaliana (Mouse-ear cress), this protein is Growth-regulating factor 9 (GRF9).